We begin with the raw amino-acid sequence, 100 residues long: Urease subunit gamma (100 aa).

This sequence belongs to the urease gamma subunit family. In terms of assembly, heterotrimer of UreA (gamma), UreB (beta) and UreC (alpha) subunits. Three heterotrimers associate to form the active enzyme.

It localises to the cytoplasm. The enzyme catalyses urea + 2 H2O + H(+) = hydrogencarbonate + 2 NH4(+). It functions in the pathway nitrogen metabolism; urea degradation; CO(2) and NH(3) from urea (urease route): step 1/1. This Marinobacter nauticus (strain ATCC 700491 / DSM 11845 / VT8) (Marinobacter aquaeolei) protein is Urease subunit gamma.